Consider the following 636-residue polypeptide: Threonine--tRNA ligase (636 aa).

Positions 1–63 (MNEINVTLPD…ADGARVEIIT (63 aa)) constitute a TGS domain. Residues 243–534 (DHRKLGRELD…LIEHFAGNFP (292 aa)) are catalytic. Positions 335, 386, and 511 each coordinate Zn(2+).

Belongs to the class-II aminoacyl-tRNA synthetase family. In terms of assembly, homodimer. Zn(2+) serves as cofactor.

Its subcellular location is the cytoplasm. It carries out the reaction tRNA(Thr) + L-threonine + ATP = L-threonyl-tRNA(Thr) + AMP + diphosphate + H(+). Functionally, catalyzes the attachment of threonine to tRNA(Thr) in a two-step reaction: L-threonine is first activated by ATP to form Thr-AMP and then transferred to the acceptor end of tRNA(Thr). Also edits incorrectly charged L-seryl-tRNA(Thr). The sequence is that of Threonine--tRNA ligase from Citrifermentans bemidjiense (strain ATCC BAA-1014 / DSM 16622 / JCM 12645 / Bem) (Geobacter bemidjiensis).